The chain runs to 454 residues: Glutamate--tRNA ligase (454 aa).

The 'HIGH' region motif lies at 7–17 (PSPTGCLHIGG). Residues Cys-96, Cys-98, Cys-123, and Asp-125 each coordinate Zn(2+). A 'KMSKS' region motif is present at residues 230–234 (RLSKR). Lys-233 contributes to the ATP binding site.

Belongs to the class-I aminoacyl-tRNA synthetase family. Glutamate--tRNA ligase type 1 subfamily. Monomer. Requires Zn(2+) as cofactor.

It localises to the cytoplasm. The catalysed reaction is tRNA(Glu) + L-glutamate + ATP = L-glutamyl-tRNA(Glu) + AMP + diphosphate. Functionally, catalyzes the attachment of glutamate to tRNA(Glu) in a two-step reaction: glutamate is first activated by ATP to form Glu-AMP and then transferred to the acceptor end of tRNA(Glu). This is Glutamate--tRNA ligase from Ruthia magnifica subsp. Calyptogena magnifica.